A 708-amino-acid chain; its full sequence is E3 ubiquitin-protein ligase Praja-2 (708 aa).

Residues 1–10 (MSQYTEKEPA) are compositionally biased toward basic and acidic residues. Disordered regions lie at residues 1 to 30 (MSQY…GYQT) and 53 to 90 (ERSL…SSLP). The residue at position 2 (Ser-2) is an N-acetylserine. The segment covering 74–90 (ENSSGSSPLDQVDSSLP) has biased composition (polar residues). Ser-196 carries the post-translational modification Phosphoserine. 3 disordered regions span residues 244–342 (GDTE…KQRS), 385–411 (TQRE…DNPF), and 425–495 (DEDS…QTSL). At Thr-246 the chain carries Phosphothreonine. A compositionally biased stretch (polar residues) spans 249 to 276 (VHQNSQEIQRSSQDEMVSTKQQNNTSQE). Residues Ser-253, Ser-309, and Ser-323 each carry the phosphoserine modification. The span at 322-332 (ISSSQVDQETG) shows a compositional bias: polar residues. Basic and acidic residues predominate over residues 333 to 342 (FNRHEAKQRS). Phosphoserine; by PKA is present on Ser-342. Phosphothreonine; by PKA is present on Thr-389. Residue Ser-432 is modified to Phosphoserine. Over residues 467 to 483 (NEPELQSDSSGPEEENQ) the composition is skewed to acidic residues. Residues 484-493 (ELSLQEGEQT) are compositionally biased toward polar residues. An interaction with PRKAR1A, PRKAR2A and PRKAR2B region spans residues 531–708 (DGNNNLEDDS…PSNDSIAEAP (178 aa)). The segment at 550 to 570 (WSLFDGFADGLGVAEAISYVD) is mediates interaction with TBC1D31. The RING-type; atypical zinc finger occupies 634–675 (CPICCSEYIKDDIATELPCHHFFHKPCVSIWLQKSGTCPVCR). A disordered region spans residues 685-708 (ASAAPSSEPDPDAPPSNDSIAEAP). A compositionally biased stretch (low complexity) spans 699–708 (PSNDSIAEAP).

As to quaternary structure, binds ubiquitin-conjugating enzymes (E2s). In vitro, interacts with the ubiquitin-conjugating enzyme, UBE2D2. The phosphorylated form interacts with PRKAR1A, PRKAR2A and PRKAR2B. Binds the catalytic subunits of cAMP-dependent protein kinase. Interacts with MFHAS1. Interacts with TBC1D31; the interaction is direct and recruits PJA2 to centrosomes.

It localises to the cytoplasm. The protein resides in the cell membrane. The protein localises to the endoplasmic reticulum membrane. It is found in the golgi apparatus membrane. Its subcellular location is the synapse. It localises to the postsynaptic density. The protein resides in the cytoskeleton. The protein localises to the microtubule organizing center. It is found in the centrosome. It carries out the reaction S-ubiquitinyl-[E2 ubiquitin-conjugating enzyme]-L-cysteine + [acceptor protein]-L-lysine = [E2 ubiquitin-conjugating enzyme]-L-cysteine + N(6)-ubiquitinyl-[acceptor protein]-L-lysine.. The protein operates within protein modification; protein ubiquitination. Has E2-dependent E3 ubiquitin-protein ligase activity. Responsible for ubiquitination of cAMP-dependent protein kinase type I and type II-alpha/beta regulatory subunits and for targeting them for proteasomal degradation. Essential for PKA-mediated long-term memory processes. Through the ubiquitination of MFHAS1, positively regulates the TLR2 signaling pathway that leads to the activation of the downstream p38 and JNK MAP kinases and promotes the polarization of macrophages toward the pro-inflammatory M1 phenotype. Plays a role in ciliogenesis by ubiquitinating OFD1. The protein is E3 ubiquitin-protein ligase Praja-2 (PJA2) of Pongo abelii (Sumatran orangutan).